We begin with the raw amino-acid sequence, 158 residues long: Transcription elongation factor GreA (158 aa).

It belongs to the GreA/GreB family.

Necessary for efficient RNA polymerase transcription elongation past template-encoded arresting sites. The arresting sites in DNA have the property of trapping a certain fraction of elongating RNA polymerases that pass through, resulting in locked ternary complexes. Cleavage of the nascent transcript by cleavage factors such as GreA or GreB allows the resumption of elongation from the new 3'terminus. GreA releases sequences of 2 to 3 nucleotides. The protein is Transcription elongation factor GreA of Wigglesworthia glossinidia brevipalpis.